Consider the following 28-residue polypeptide: Glutathione S-transferase 5 (28 aa).

The 28-residue stretch at 1 to 28 folds into the GST N-terminal domain; sequence PNYKLTYFNLRGRAEISRYLFAYAGIKY. Tyrosine 7 is a glutathione binding site.

This sequence belongs to the GST superfamily. Sigma family. Homodimer.

Its subcellular location is the cytoplasm. The catalysed reaction is RX + glutathione = an S-substituted glutathione + a halide anion + H(+). Conjugation of reduced glutathione to a wide number of exogenous and endogenous hydrophobic electrophiles. This is Glutathione S-transferase 5 from Gallus gallus (Chicken).